A 504-amino-acid chain; its full sequence is ATP synthase subunit alpha, chloroplastic (504 aa).

170–177 (GDRQTGKT) lines the ATP pocket.

It belongs to the ATPase alpha/beta chains family. As to quaternary structure, F-type ATPases have 2 components, CF(1) - the catalytic core - and CF(0) - the membrane proton channel. CF(1) has five subunits: alpha(3), beta(3), gamma(1), delta(1), epsilon(1). CF(0) has four main subunits: a, b, b' and c.

It is found in the plastid. The protein localises to the chloroplast thylakoid membrane. The catalysed reaction is ATP + H2O + 4 H(+)(in) = ADP + phosphate + 5 H(+)(out). Functionally, produces ATP from ADP in the presence of a proton gradient across the membrane. The alpha chain is a regulatory subunit. The protein is ATP synthase subunit alpha, chloroplastic of Cyanidium caldarium (Red alga).